The chain runs to 707 residues: Matrix metalloproteinase-9 (707 aa).

The signal sequence occupies residues 1–19 (MSLWQPLVLVLLVLGCCFA). A propeptide spans 20-93 (APRQRQSTLV…GELDSATLKA (74 aa)) (activation peptide). Residue Asn38 is glycosylated (N-linked (GlcNAc...) asparagine). The short motif at 97-104 (PRCGVPDL) is the Cysteine switch element. Cys99 is a Zn(2+) binding site. Asn120 and Asn127 each carry an N-linked (GlcNAc...) asparagine glycan. Asp131 and Asp165 together coordinate Ca(2+). 2 residues coordinate Zn(2+): His175 and Asp177. 4 residues coordinate Ca(2+): Asp182, Gly183, Asp185, and Leu187. His190 lines the Zn(2+) pocket. Gly197, Gln199, and Asp201 together coordinate Ca(2+). His203 contacts Zn(2+). Positions 205, 206, and 208 each coordinate Ca(2+). Fibronectin type-II domains are found at residues 225–273 (ADGA…FCPS), 283–331 (ADGK…FCPT), and 342–390 (SAGE…FCPD). 6 disulfides stabilise this stretch: Cys230-Cys256, Cys244-Cys271, Cys288-Cys314, Cys302-Cys329, Cys347-Cys373, and Cys361-Cys388. His401 lines the Zn(2+) pocket. Glu402 is a catalytic residue. Zn(2+)-binding residues include His405 and His411. Residues 431-508 (LHKDDVNGIR…AGPSTATTVP (78 aa)) form a disordered region. Pro residues-rich tracts occupy residues 452-475 (RPPT…PPTV) and 486-499 (TGPP…PPTA). Cys516 and Cys704 are disulfide-bonded. Hemopexin repeat units follow at residues 518–563 (VNIF…WPAL), 564–608 (PRKL…GLGA), 610–657 (VAQV…FPGV), and 658–704 (PLDT…ILQC).

Belongs to the peptidase M10A family. Exists as monomer or homodimer; disulfide-linked. Also exists as heterodimer with LCN2. Macrophages and transformed cell lines produce only the monomeric form. Interacts with ECM1. As to quaternary structure, (Microbial infection) Interacts with Staphylococcus aureus protein SSL5; this interaction inhibits MMP9 activity. The cofactor is Zn(2+). It depends on Ca(2+) as a cofactor. In terms of processing, processing of the precursor yields different active forms of 64, 67 and 82 kDa. Sequentially processing by MMP3 yields the 82 kDa matrix metalloproteinase-9. Post-translationally, N- and O-glycosylated. Detected in neutrophils (at protein level). Produced by normal alveolar macrophages and granulocytes.

The protein resides in the secreted. Its subcellular location is the extracellular space. It is found in the extracellular matrix. It catalyses the reaction Cleavage of gelatin types I and V and collagen types IV and V.. With respect to regulation, inhibited by histatin-3 1/24 (histatin-5). Inhibited by ECM1. Functionally, matrix metalloproteinase that plays an essential role in local proteolysis of the extracellular matrix and in leukocyte migration. Could play a role in bone osteoclastic resorption. Cleaves KiSS1 at a Gly-|-Leu bond. Cleaves NINJ1 to generate the Secreted ninjurin-1 form. Cleaves type IV and type V collagen into large C-terminal three quarter fragments and shorter N-terminal one quarter fragments. Degrades fibronectin but not laminin or Pz-peptide. The sequence is that of Matrix metalloproteinase-9 (MMP9) from Homo sapiens (Human).